Here is a 597-residue protein sequence, read N- to C-terminus: Period protein homolog lin-42 (597 aa).

The interval Met-1 to Ser-44 is disordered. The region spanning Leu-155 to Asn-223 is the PAS domain. 4 disordered regions span residues Pro-313–Gly-335, Lys-418–Thr-450, Asp-473–Gly-509, and Asp-555–Asn-597. Residues Ser-425–Tyr-438 show a composition bias toward basic and acidic residues. Over residues Ile-487–Tyr-497 the composition is skewed to polar residues. Low complexity predominate over residues Gly-561–Pro-577.

The protein resides in the nucleus. Its subcellular location is the cytoplasm. In terms of biological role, transcriptional repressor which interacts with the promoter region of target genes. Has a specific role in developmental timing where it regulates temporal expression of a number of miRNAs and mRNAs. Controls temporal cell fate transition during embryonic and early larval development by restricting the expression of specific miRNAs, including let-7, miR-48, lin-4, miR-35 and miR-58. Restricts the accumulation of lin-29 in the hypodermis to the larval L4 stage, thus controlling terminal differentiation of seam cells. Has a role in the miRNA-mediated specification of asymmetric gene expression patterns in gustatory neurons. May also regulate genes involved in other biological processes including transport, small molecule metabolism, and growth. Inhibits dauer formation, by antagonizing daf-12. Its function is as follows. Specifically required for maintaining the timing of larval development and molting cycle rhythms. This Caenorhabditis elegans protein is Period protein homolog lin-42.